Consider the following 1280-residue polypeptide: SET and MYND domain-containing protein DDB_G0284059 (1280 aa).

Disordered stretches follow at residues 1-35 (MTKK…SHNH) and 111-167 (INKI…QKQQ). Low complexity-rich tracts occupy residues 16–25 (NNNNNNNHGN) and 117–153 (ENSP…QSQP). 2 TPR repeats span residues 272–305 (SKGY…YDME) and 383–416 (HKLY…IEKR). Residues 439–468 (QKDEEIEQELDNKNNNSNDDEKQQQQQQQQ) adopt a coiled-coil conformation. Cys533, Cys536, Cys546, Cys549, Cys555, Cys559, His568, and Cys572 together coordinate Zn(2+). The segment at 533-572 (CYNCFKEILSPIYCKECSNSQYCSNKCLNEDYVKQHGREC) adopts an MYND-type zinc-finger fold. 4 disordered regions span residues 601 to 642 (ANKG…QNLN), 659 to 726 (ALSS…TTTT), 854 to 905 (QQQQ…PFSP), and 1039 to 1079 (AKLQ…LNNN). Composition is skewed to low complexity over residues 659–697 (ALSS…SLTE), 712–726 (SSSS…TTTT), 854–898 (QQQQ…QNPP), 1042–1053 (QQQQQQQQQHQQ), and 1061–1079 (NSNP…LNNN). Positions 822-965 (CQLTTYTFAI…KGEEILGCYG (144 aa)) constitute an SET domain. A TPR 3 repeat occupies 1218–1251 (GREYSKLGQIYLTLGEIEKSEDAIEKAESILMSW).

This sequence belongs to the class V-like SAM-binding methyltransferase superfamily.

Functionally, probable methyltransferase. In Dictyostelium discoideum (Social amoeba), this protein is SET and MYND domain-containing protein DDB_G0284059.